Here is a 266-residue protein sequence, read N- to C-terminus: Glucose 1-dehydrogenase (266 aa).

15–39 (LVTGASQGIGEATALRFAEEGAQVA) contributes to the NADP(+) binding site. Position 149 (Ser149) interacts with substrate. Tyr162 (proton acceptor) is an active-site residue.

Belongs to the short-chain dehydrogenases/reductases (SDR) family. Homotetramer or homooctamer.

The catalysed reaction is D-glucose + NADP(+) = D-glucono-1,5-lactone + NADPH + H(+). Oxidizes both D-glucose and D-mannose, but is 15 times more catalytically efficient with mannose. Strictly dependent on NADP. The sequence is that of Glucose 1-dehydrogenase from Gluconobacter oxydans (strain 621H) (Gluconobacter suboxydans).